A 195-amino-acid chain; its full sequence is MRQAEITRNTLETQITVRLNLDGTGQGKYATGVPFLDHMLDQIARHGLIDLDIEAKGDLHIDAHHTVEDIGITFGQALAKAWGDKKGLTRYGHSYVPLDEALSRVVIDLSGRPGLELHVEFTRAVIGTFDVDLVGEFFHGLVNHAGMTLHIDNLRGKNAHHQAETIFKAFGRALRMAVTPDPRMAGTMPSTKGSL.

The protein belongs to the imidazoleglycerol-phosphate dehydratase family.

Its subcellular location is the cytoplasm. The catalysed reaction is D-erythro-1-(imidazol-4-yl)glycerol 3-phosphate = 3-(imidazol-4-yl)-2-oxopropyl phosphate + H2O. Its pathway is amino-acid biosynthesis; L-histidine biosynthesis; L-histidine from 5-phospho-alpha-D-ribose 1-diphosphate: step 6/9. This is Imidazoleglycerol-phosphate dehydratase from Dechloromonas aromatica (strain RCB).